The primary structure comprises 265 residues: Hydroxyethylthiazole kinase (265 aa).

A substrate-binding site is contributed by Met-36. Residues Lys-112 and Ser-160 each coordinate ATP. Gly-187 contributes to the substrate binding site.

The protein belongs to the Thz kinase family. It depends on Mg(2+) as a cofactor.

The catalysed reaction is 5-(2-hydroxyethyl)-4-methylthiazole + ATP = 4-methyl-5-(2-phosphooxyethyl)-thiazole + ADP + H(+). The protein operates within cofactor biosynthesis; thiamine diphosphate biosynthesis; 4-methyl-5-(2-phosphoethyl)-thiazole from 5-(2-hydroxyethyl)-4-methylthiazole: step 1/1. Catalyzes the phosphorylation of the hydroxyl group of 4-methyl-5-beta-hydroxyethylthiazole (THZ). The polypeptide is Hydroxyethylthiazole kinase (Clostridium perfringens (strain 13 / Type A)).